We begin with the raw amino-acid sequence, 312 residues long: Dihydroorotate dehydrogenase B (NAD(+)), catalytic subunit (312 aa).

Residues serine 21 and 45 to 46 contribute to the FMN site; that span reads KA. Residues lysine 45 and 69–73 contribute to the substrate site; that span reads NAIGL. FMN contacts are provided by asparagine 99 and asparagine 127. Asparagine 127 provides a ligand contact to substrate. Cysteine 130 acts as the Nucleophile in catalysis. Residues lysine 165 and isoleucine 191 each contribute to the FMN site. 192 to 193 contributes to the substrate binding site; the sequence is NT. Residues glycine 217, 243–244, and 265–266 each bind FMN; these read GG and GT.

The protein belongs to the dihydroorotate dehydrogenase family. Type 1 subfamily. Heterotetramer of 2 PyrK and 2 PyrD type B subunits. FMN is required as a cofactor.

Its subcellular location is the cytoplasm. The enzyme catalyses (S)-dihydroorotate + NAD(+) = orotate + NADH + H(+). It functions in the pathway pyrimidine metabolism; UMP biosynthesis via de novo pathway; orotate from (S)-dihydroorotate (NAD(+) route): step 1/1. Its function is as follows. Catalyzes the conversion of dihydroorotate to orotate with NAD(+) as electron acceptor. The polypeptide is Dihydroorotate dehydrogenase B (NAD(+)), catalytic subunit (pyrD) (Anoxybacillus flavithermus (strain DSM 21510 / WK1)).